The sequence spans 391 residues: Squalene synthase 8 (391 aa).

This sequence belongs to the phytoene/squalene synthase family. Requires Mg(2+) as cofactor. Mn(2+) is required as a cofactor.

Its subcellular location is the endoplasmic reticulum. It carries out the reaction 2 (2E,6E)-farnesyl diphosphate + NADH + H(+) = squalene + 2 diphosphate + NAD(+). The enzyme catalyses 2 (2E,6E)-farnesyl diphosphate + NADPH + H(+) = squalene + 2 diphosphate + NADP(+). It participates in terpene metabolism; lanosterol biosynthesis; lanosterol from farnesyl diphosphate: step 1/3. Its function is as follows. Component of the triterpene saponins (e.g. ginsenosides or panaxosides) and phytosterols biosynthetic pathways. Catalyzes the biosynthesis of squalene. In Panax ginseng (Korean ginseng), this protein is Squalene synthase 8.